We begin with the raw amino-acid sequence, 2061 residues long: Myoferlin (2061 aa).

Positions 1 to 101 (MLRVIVESAS…TGDQSRSLPY (101 aa)) constitute a C2 1 domain. At 1–2025 (MLRVIVESAS…MKFIVWRRFK (2025 aa)) the chain is on the cytoplasmic side. Positions 123 to 172 (GYDPPSAPHPNDLSGPSVPGMGGDGEEDEGDEDRLDNAVRGPGPKGPVGT) are disordered. Residues 146–156 (DGEEDEGDEDR) show a composition bias toward acidic residues. Serine 174 is modified (phosphoserine). C2 domains are found at residues 181 to 300 (RLTK…RKWL) and 339 to 474 (DSDD…VEDF). Residues 186–281 (KNSRRMLSNK…RADCLMGEFK (96 aa)) form a necessary for interaction with EHD2 region. The interval 323-342 (LGTGDEPPPERRDRDNDSDD) is disordered. Positions 390, 396, 444, 446, and 452 each coordinate Ca(2+). At lysine 553 the chain carries N6-acetyllysine. The residue at position 729 (serine 729) is a Phosphoserine. Lysine 884 carries the N6-acetyllysine modification. Residues 938–967 (ESRYPGGDWKPAEDTYTDANGDKAASPSEL) are disordered. C2 domains lie at 1123–1251 (GANT…LLWH) and 1282–1410 (LPPQ…GKED). Ca(2+)-binding residues include aspartate 1155, aspartate 1161, aspartate 1217, and aspartate 1219. Lysine 1507 carries the post-translational modification N6-acetyllysine. 2 consecutive C2 domains span residues 1536–1654 (PAPP…SHCG) and 1772–1920 (GPPG…EKCR). Aspartate 1569, aspartate 1575, aspartate 1624, aspartate 1626, aspartate 1891, serine 1894, and aspartate 1897 together coordinate Ca(2+). Residue serine 1915 is modified to Phosphoserine. The chain crosses the membrane as a helical span at residues 2026–2046 (WVIIGLLFLLILLLFVAVLLY). Residues 2047–2061 (SLPNYLSMKIVKPNV) are Extracellular-facing.

This sequence belongs to the ferlin family. Interacts with DNM2 and KDR. Interacts with EHD1. Interacts with EHD2; the interaction is direct. Interacts with RIPOR2. The cofactor is Ca(2+). As to expression, expressed in myoblast and endothelial cells (at protein level). Highly expressed in cardiac and skeletal muscles. Also present in lung, and at very low levels in kidney, placenta and brain.

Its subcellular location is the cell membrane. The protein resides in the nucleus membrane. It localises to the cytoplasmic vesicle membrane. Functionally, calcium/phospholipid-binding protein that plays a role in the plasmalemma repair mechanism of endothelial cells that permits rapid resealing of membranes disrupted by mechanical stress. Involved in endocytic recycling. Implicated in VEGF signal transduction by regulating the levels of the receptor KDR. The sequence is that of Myoferlin (MYOF) from Homo sapiens (Human).